A 217-amino-acid chain; its full sequence is 3,4-dihydroxy-2-butanone 4-phosphate synthase (217 aa).

Residues 37–38 (RE), Asp-42, 150–154 (RGGHT), and Glu-174 contribute to the D-ribulose 5-phosphate site. Mg(2+) is bound at residue Glu-38. Residue His-153 coordinates Mg(2+).

It belongs to the DHBP synthase family. As to quaternary structure, homodimer. Mg(2+) is required as a cofactor. Requires Mn(2+) as cofactor.

It catalyses the reaction D-ribulose 5-phosphate = (2S)-2-hydroxy-3-oxobutyl phosphate + formate + H(+). It functions in the pathway cofactor biosynthesis; riboflavin biosynthesis; 2-hydroxy-3-oxobutyl phosphate from D-ribulose 5-phosphate: step 1/1. Its function is as follows. Catalyzes the conversion of D-ribulose 5-phosphate to formate and 3,4-dihydroxy-2-butanone 4-phosphate. This Salmonella heidelberg (strain SL476) protein is 3,4-dihydroxy-2-butanone 4-phosphate synthase.